We begin with the raw amino-acid sequence, 85 residues long: Sec-independent protein translocase protein TatA (85 aa).

The chain crosses the membrane as a helical span at residues 1-21; it reads MGGISIWQLLIIALIVVLLFG. The disordered stretch occupies residues 43–85; it reads MSSEEDKKALEDAEAAKPVQTAQTAQPTQQATEKKPESNKEQA. Over residues 46 to 57 the composition is skewed to basic and acidic residues; that stretch reads EEDKKALEDAEA. The segment covering 58–73 has biased composition (low complexity); sequence AKPVQTAQTAQPTQQA. Residues 74–85 show a composition bias toward basic and acidic residues; sequence TEKKPESNKEQA.

Belongs to the TatA/E family. The Tat system comprises two distinct complexes: a TatABC complex, containing multiple copies of TatA, TatB and TatC subunits, and a separate TatA complex, containing only TatA subunits. Substrates initially bind to the TatABC complex, which probably triggers association of the separate TatA complex to form the active translocon.

The protein resides in the cell inner membrane. Functionally, part of the twin-arginine translocation (Tat) system that transports large folded proteins containing a characteristic twin-arginine motif in their signal peptide across membranes. TatA could form the protein-conducting channel of the Tat system. This is Sec-independent protein translocase protein TatA from Shewanella sp. (strain MR-4).